We begin with the raw amino-acid sequence, 736 residues long: Elongation factor 2 (736 aa).

The 245-residue stretch at 18-262 (TRVRNIGIIA…AVIKFVPNPV (245 aa)) folds into the tr-type G domain. GTP is bound by residues 27–34 (AHVDHGKT), 93–97 (DTPGH), and 147–150 (NKVD). At histidine 603 the chain carries Diphthamide.

Belongs to the TRAFAC class translation factor GTPase superfamily. Classic translation factor GTPase family. EF-G/EF-2 subfamily.

The protein resides in the cytoplasm. Catalyzes the GTP-dependent ribosomal translocation step during translation elongation. During this step, the ribosome changes from the pre-translocational (PRE) to the post-translocational (POST) state as the newly formed A-site-bound peptidyl-tRNA and P-site-bound deacylated tRNA move to the P and E sites, respectively. Catalyzes the coordinated movement of the two tRNA molecules, the mRNA and conformational changes in the ribosome. The sequence is that of Elongation factor 2 from Metallosphaera sedula (strain ATCC 51363 / DSM 5348 / JCM 9185 / NBRC 15509 / TH2).